A 311-amino-acid polypeptide reads, in one-letter code: Nod factor export ATP-binding protein I (311 aa).

Residues 13–243 enclose the ABC transporter domain; that stretch reads IDLAGVSKSY…QIGCPVIEIY (231 aa). 45–52 contacts ATP; that stretch reads GPNGAGKS.

This sequence belongs to the ABC transporter superfamily. Lipooligosaccharide exporter (TC 3.A.1.102) family. In terms of assembly, the complex is composed of two ATP-binding proteins (NodI) and two transmembrane proteins (NodJ).

The protein resides in the cell inner membrane. Part of the ABC transporter complex NodIJ involved in the export of the nodulation factors (Nod factors), the bacterial signal molecules that induce symbiosis and subsequent nodulation induction. Nod factors are LCO (lipo-chitin oligosaccharide), a modified beta-1,4-linked N-acetylglucosamine oligosaccharide. This subunit is responsible for energy coupling to the transport system. The protein is Nod factor export ATP-binding protein I of Rhizobium leguminosarum bv. viciae.